The sequence spans 703 residues: Elongation factor G 1 (703 aa).

Positions 8–290 (ERYRNIGISA…AVIDFLPSPV (283 aa)) constitute a tr-type G domain. Residues 17 to 24 (AHIDAGKT), 88 to 92 (DTPGH), and 142 to 145 (NKMD) each bind GTP.

This sequence belongs to the TRAFAC class translation factor GTPase superfamily. Classic translation factor GTPase family. EF-G/EF-2 subfamily.

The protein resides in the cytoplasm. Functionally, catalyzes the GTP-dependent ribosomal translocation step during translation elongation. During this step, the ribosome changes from the pre-translocational (PRE) to the post-translocational (POST) state as the newly formed A-site-bound peptidyl-tRNA and P-site-bound deacylated tRNA move to the P and E sites, respectively. Catalyzes the coordinated movement of the two tRNA molecules, the mRNA and conformational changes in the ribosome. This is Elongation factor G 1 from Ralstonia nicotianae (strain ATCC BAA-1114 / GMI1000) (Ralstonia solanacearum).